A 356-amino-acid chain; its full sequence is 3-dehydroquinate synthase (356 aa).

NAD(+)-binding positions include 71-76 (EGEASK), 105-109 (GVTGD), 129-130 (TS), K142, and K151. Residues E184, H247, and H264 each contribute to the Zn(2+) site.

The protein belongs to the sugar phosphate cyclases superfamily. Dehydroquinate synthase family. It depends on Co(2+) as a cofactor. The cofactor is Zn(2+). NAD(+) is required as a cofactor.

The protein resides in the cytoplasm. It catalyses the reaction 7-phospho-2-dehydro-3-deoxy-D-arabino-heptonate = 3-dehydroquinate + phosphate. Its pathway is metabolic intermediate biosynthesis; chorismate biosynthesis; chorismate from D-erythrose 4-phosphate and phosphoenolpyruvate: step 2/7. Its function is as follows. Catalyzes the conversion of 3-deoxy-D-arabino-heptulosonate 7-phosphate (DAHP) to dehydroquinate (DHQ). In Lactococcus lactis subsp. cremoris (strain SK11), this protein is 3-dehydroquinate synthase.